Consider the following 832-residue polypeptide: Protein wech (832 aa).

Residues 1-14 are compositionally biased toward polar residues; that stretch reads MMELLSNNSVPQQM. A disordered region spans residues 1–42; it reads MMELLSNNSVPQQMASSNAPSANNVAHSSTANGSGGGSVSSN. Positions 15 to 32 are enriched in low complexity; that stretch reads ASSNAPSANNVAHSSTAN. Ser107 carries the post-translational modification Phosphoserine. 2 B box-type zinc fingers span residues 118–163 and 184–224; these read NSSI…IVSL and SGNF…YASI. Residues Cys123, Cys126, Cys145, His149, Cys189, His192, Cys211, and His216 each contribute to the Zn(2+) site. 3 positions are modified to phosphoserine: Ser470, Ser475, and Ser506. NHL repeat units follow at residues 537 to 580, 584 to 627, 631 to 674, 680 to 722, and 727 to 770; these read SLSF…FNPD, KFKF…FTAS, LLKF…FDSE, QIVF…IDPD, and LSVK…FNQN.

As to quaternary structure, interacts with the head domain of rhea and the kinase domain of Ilk. Interacts with AGO1. Interacts with mei-P26. In terms of tissue distribution, expressed in ovarian germline stem cells (at protein level). Expressed ubiquitously in all epithelial cells during early stages of embryogenesis. Specifically expressed at epidermal muscle attachment site.

Its function is as follows. Vital for larval development. Plays a role in tumor formation. A crucial component for the physical link between integrins and the cytoskeleton in the epidermal muscle attachment sites. This chain is Protein wech (wech), found in Drosophila melanogaster (Fruit fly).